Here is a 498-residue protein sequence, read N- to C-terminus: Glycerol kinase (498 aa).

Residue Thr-12 participates in ADP binding. The ATP site is built by Thr-12, Thr-13, and Ser-14. Thr-12 is a sn-glycerol 3-phosphate binding site. ADP is bound at residue Arg-16. The sn-glycerol 3-phosphate site is built by Arg-82, Tyr-134, and Asp-243. Glycerol-binding residues include Arg-82, Tyr-134, Asp-243, and Gln-244. Positions 265 and 308 each coordinate ADP. Residues Thr-265, Gly-308, Gln-312, and Gly-411 each coordinate ATP. Residue Gly-411 coordinates ADP.

It belongs to the FGGY kinase family.

The catalysed reaction is glycerol + ATP = sn-glycerol 3-phosphate + ADP + H(+). It functions in the pathway polyol metabolism; glycerol degradation via glycerol kinase pathway; sn-glycerol 3-phosphate from glycerol: step 1/1. Inhibited by fructose 1,6-bisphosphate (FBP). Its function is as follows. Key enzyme in the regulation of glycerol uptake and metabolism. Catalyzes the phosphorylation of glycerol to yield sn-glycerol 3-phosphate. The chain is Glycerol kinase from Brucella suis (strain ATCC 23445 / NCTC 10510).